The primary structure comprises 122 residues: Large ribosomal subunit protein uL14 (122 aa).

This sequence belongs to the universal ribosomal protein uL14 family. Part of the 50S ribosomal subunit. Forms a cluster with proteins L3 and L19. In the 70S ribosome, L14 and L19 interact and together make contacts with the 16S rRNA in bridges B5 and B8.

In terms of biological role, binds to 23S rRNA. Forms part of two intersubunit bridges in the 70S ribosome. This Azorhizobium caulinodans (strain ATCC 43989 / DSM 5975 / JCM 20966 / LMG 6465 / NBRC 14845 / NCIMB 13405 / ORS 571) protein is Large ribosomal subunit protein uL14.